The following is a 110-amino-acid chain: DNA-directed RNA polymerase subunit omega (110 aa).

It belongs to the RNA polymerase subunit omega family. As to quaternary structure, the RNAP catalytic core consists of 2 alpha, 1 beta, 1 beta' and 1 omega subunit. When a sigma factor is associated with the core the holoenzyme is formed, which can initiate transcription.

The catalysed reaction is RNA(n) + a ribonucleoside 5'-triphosphate = RNA(n+1) + diphosphate. Promotes RNA polymerase assembly. Latches the N- and C-terminal regions of the beta' subunit thereby facilitating its interaction with the beta and alpha subunits. This is DNA-directed RNA polymerase subunit omega from Vesicomyosocius okutanii subsp. Calyptogena okutanii (strain HA).